The primary structure comprises 257 residues: Leucine-rich repeat-containing protein 3 (257 aa).

Positions 1 to 32 (MGTVRPPRPSLLLVSTRESCLFLLFCLHLGAA) are cleaved as a signal peptide. In terms of domain architecture, LRRNT spans 33–64 (CPQPCRCPDHAGAVAVFCSLRGLQEVPEDIPA). LRR repeat units lie at residues 65-86 (NTVL…AFQH), 89-110 (RLRE…TFAG), 114-135 (GLRL…ALGK), and 136-157 (LSAK…QEAL). A helical transmembrane segment spans residues 205–225 (VAMLVTMFGWFAMVIAYVVYY).

It belongs to the LRRC3 family. In terms of tissue distribution, widely expressed; detected in testis, lung, small intestine, breast, brain, heart, bone marrow, placenta, colon, fetal brain, liver, fetal liver, thymus, salivary gland, spinal cord, spleen, trachea and adrenal gland.

It localises to the membrane. This is Leucine-rich repeat-containing protein 3 (LRRC3) from Homo sapiens (Human).